The sequence spans 267 residues: Sulfate transporter CysZ (267 aa).

The next 4 helical transmembrane spans lie at 29-49, 73-93, 149-169, and 212-232; these read FVIM…WLFI, ILLI…FTTL, IILF…PIIV, and GLVM…PVAV.

It belongs to the CysZ family.

It is found in the cell inner membrane. Its function is as follows. High affinity, high specificity proton-dependent sulfate transporter, which mediates sulfate uptake. Provides the sulfur source for the cysteine synthesis pathway. This is Sulfate transporter CysZ from Pasteurella multocida (strain Pm70).